Here is a 397-residue protein sequence, read N- to C-terminus: Tryptophan synthase beta chain (397 aa).

At Lys91 the chain carries N6-(pyridoxal phosphate)lysine.

Belongs to the TrpB family. In terms of assembly, tetramer of two alpha and two beta chains. Pyridoxal 5'-phosphate is required as a cofactor.

The catalysed reaction is (1S,2R)-1-C-(indol-3-yl)glycerol 3-phosphate + L-serine = D-glyceraldehyde 3-phosphate + L-tryptophan + H2O. The protein operates within amino-acid biosynthesis; L-tryptophan biosynthesis; L-tryptophan from chorismate: step 5/5. In terms of biological role, the beta subunit is responsible for the synthesis of L-tryptophan from indole and L-serine. The chain is Tryptophan synthase beta chain from Bacillus anthracis (strain A0248).